Consider the following 344-residue polypeptide: Nuclear distribution protein nudE-like 1-B (344 aa).

Residues 13–190 adopt a coiled-coil conformation; sequence KEEIVYWREL…LAVRERQTDG (178 aa). 2 disordered regions span residues 186-209 and 325-344; these read RQTD…TDSS and PPGV…PLSV. Pro residues predominate over residues 333–344; the sequence is PPSPPGLLPLSV.

It belongs to the nudE family. Phosphorylated in mitosis.

It is found in the cytoplasm. The protein resides in the cytoskeleton. The protein localises to the microtubule organizing center. Its subcellular location is the centrosome. It localises to the spindle. Functionally, required for organization of the cellular microtubule array and microtubule anchoring at the centrosome. Positively regulates the activity of the minus-end directed microtubule motor protein dynein. May enhance dynein-mediated microtubule sliding by targeting dynein to the microtubule plus end. Positively regulates lysosome peripheral distribution and ruffled border formation in osteoclasts. The protein is Nuclear distribution protein nudE-like 1-B (ndel1-b) of Xenopus laevis (African clawed frog).